A 341-amino-acid chain; its full sequence is GTP 3',8-cyclase (341 aa).

A Radical SAM core domain is found at 11–231 (KRERPLRDLR…DLINQHMPTE (221 aa)). A GTP-binding site is contributed by Arg20. [4Fe-4S] cluster-binding residues include Cys27 and Cys31. Tyr33 provides a ligand contact to S-adenosyl-L-methionine. Residue Cys34 coordinates [4Fe-4S] cluster. Arg75 provides a ligand contact to GTP. Gly79 lines the S-adenosyl-L-methionine pocket. Thr106 is a GTP binding site. Ser130 is a binding site for S-adenosyl-L-methionine. Lys167 is a binding site for GTP. Met201 provides a ligand contact to S-adenosyl-L-methionine. Positions 265 and 268 each coordinate [4Fe-4S] cluster. 270-272 (RAR) serves as a coordination point for GTP. [4Fe-4S] cluster is bound at residue Cys282.

The protein belongs to the radical SAM superfamily. MoaA family. Monomer and homodimer. [4Fe-4S] cluster serves as cofactor.

It catalyses the reaction GTP + AH2 + S-adenosyl-L-methionine = (8S)-3',8-cyclo-7,8-dihydroguanosine 5'-triphosphate + 5'-deoxyadenosine + L-methionine + A + H(+). Its pathway is cofactor biosynthesis; molybdopterin biosynthesis. In terms of biological role, catalyzes the cyclization of GTP to (8S)-3',8-cyclo-7,8-dihydroguanosine 5'-triphosphate. This is GTP 3',8-cyclase from Bacillus velezensis (strain DSM 23117 / BGSC 10A6 / LMG 26770 / FZB42) (Bacillus amyloliquefaciens subsp. plantarum).